Reading from the N-terminus, the 251-residue chain is Probable transcriptional regulatory protein RSal33209_2002 (251 aa).

This sequence belongs to the TACO1 family.

The protein localises to the cytoplasm. In Renibacterium salmoninarum (strain ATCC 33209 / DSM 20767 / JCM 11484 / NBRC 15589 / NCIMB 2235), this protein is Probable transcriptional regulatory protein RSal33209_2002.